Here is a 347-residue protein sequence, read N- to C-terminus: ATPase GET3 (347 aa).

26–33 (KGGVGKTT) contacts ATP. Asp-57 is a catalytic residue. ATP contacts are provided by Glu-240 and Asn-267. Positions 279 and 282 each coordinate Zn(2+).

The protein belongs to the arsA ATPase family. As to quaternary structure, homodimer. Component of the Golgi to ER traffic (GET) complex, which is composed of GET1, GET2 and GET3. Within the complex, GET1 and GET2 form a heterotetramer which is stabilized by phosphatidylinositol binding and which binds to the GET3 homodimer. Interacts with the chloride channel protein GEF1.

The protein localises to the cytoplasm. It localises to the endoplasmic reticulum. It is found in the golgi apparatus. ATPase required for the post-translational delivery of tail-anchored (TA) proteins to the endoplasmic reticulum. Recognizes and selectively binds the transmembrane domain of TA proteins in the cytosol. This complex then targets to the endoplasmic reticulum by membrane-bound receptors GET1 and GET2, where the tail-anchored protein is released for insertion. This process is regulated by ATP binding and hydrolysis. ATP binding drives the homodimer towards the closed dimer state, facilitating recognition of newly synthesized TA membrane proteins. ATP hydrolysis is required for insertion. Subsequently, the homodimer reverts towards the open dimer state, lowering its affinity for the GET1-GET2 receptor, and returning it to the cytosol to initiate a new round of targeting. Cooperates with the HDEL receptor ERD2 to mediate the ATP-dependent retrieval of resident ER proteins that contain a C-terminal H-D-E-L retention signal from the Golgi to the ER. Involved in low-level resistance to the oxyanions arsenite and arsenate, and in heat tolerance. The sequence is that of ATPase GET3 from Scheffersomyces stipitis (strain ATCC 58785 / CBS 6054 / NBRC 10063 / NRRL Y-11545) (Yeast).